Here is a 772-residue protein sequence, read N- to C-terminus: Probable beta-glucosidase M (772 aa).

The first 20 residues, 1–20, serve as a signal peptide directing secretion; that stretch reads MLTSWGKTGFVLALALGGRA. Asn259 carries an N-linked (GlcNAc...) asparagine glycan. Residue Asp287 is part of the active site. 7 N-linked (GlcNAc...) asparagine glycosylation sites follow: Asn315, Asn322, Asn438, Asn523, Asn547, Asn574, and Asn586.

This sequence belongs to the glycosyl hydrolase 3 family.

The protein resides in the secreted. The enzyme catalyses Hydrolysis of terminal, non-reducing beta-D-glucosyl residues with release of beta-D-glucose.. Its pathway is glycan metabolism; cellulose degradation. Functionally, beta-glucosidases are one of a number of cellulolytic enzymes involved in the degradation of cellulosic biomass. Catalyzes the last step releasing glucose from the inhibitory cellobiose. This chain is Probable beta-glucosidase M (bglM), found in Emericella nidulans (strain FGSC A4 / ATCC 38163 / CBS 112.46 / NRRL 194 / M139) (Aspergillus nidulans).